The sequence spans 126 residues: Large ribosomal subunit protein bL12 (126 aa).

The protein belongs to the bacterial ribosomal protein bL12 family. Homodimer. Part of the ribosomal stalk of the 50S ribosomal subunit. Forms a multimeric L10(L12)X complex, where L10 forms an elongated spine to which 2 to 4 L12 dimers bind in a sequential fashion. Binds GTP-bound translation factors.

In terms of biological role, forms part of the ribosomal stalk which helps the ribosome interact with GTP-bound translation factors. Is thus essential for accurate translation. This Nitrosospira multiformis (strain ATCC 25196 / NCIMB 11849 / C 71) protein is Large ribosomal subunit protein bL12.